A 229-amino-acid chain; its full sequence is DNA repair protein RecO (229 aa).

It belongs to the RecO family.

Involved in DNA repair and RecF pathway recombination. This Legionella pneumophila (strain Corby) protein is DNA repair protein RecO.